Here is a 77-residue protein sequence, read N- to C-terminus: Acyl carrier protein (77 aa).

Positions 2-77 constitute a Carrier domain; the sequence is SDIADRVKKI…DAVKFISEAA (76 aa). An O-(pantetheine 4'-phosphoryl)serine modification is found at S37.

Belongs to the acyl carrier protein (ACP) family. In terms of processing, 4'-phosphopantetheine is transferred from CoA to a specific serine of apo-ACP by AcpS. This modification is essential for activity because fatty acids are bound in thioester linkage to the sulfhydryl of the prosthetic group.

The protein resides in the cytoplasm. The protein operates within lipid metabolism; fatty acid biosynthesis. In terms of biological role, carrier of the growing fatty acid chain in fatty acid biosynthesis. This chain is Acyl carrier protein, found in Cereibacter sphaeroides (strain ATCC 17029 / ATH 2.4.9) (Rhodobacter sphaeroides).